Reading from the N-terminus, the 292-residue chain is Aquaporin PIP1-3/PIP1-4 (292 aa).

Positions 1–42 (MEGKEEDVRLGANKFSERQPIGTAAQGAGAGDDDKDYKEPPP) are disordered. The next 2 helical transmembrane spans lie at 61–81 (IAEF…VMGV) and 96–118 (IAWS…SGGH). An NPA 1 motif is present at residues 120–122 (NPA). 3 helical membrane-spanning segments follow: residues 139-159 (IFYI…VKGF), 181-201 (GDGL…VFSA), and 215-235 (ILAP…TIPI). Positions 241 to 243 (NPA) match the NPA 2 motif. The chain crosses the membrane as a helical span at residues 263 to 283 (IFWVGPFIGAALAAIYHQVII).

It belongs to the MIP/aquaporin (TC 1.A.8) family. PIP (TC 1.A.8.11) subfamily.

It is found in the cell membrane. In terms of biological role, aquaporins facilitate the transport of water and small neutral solutes across cell membranes. The polypeptide is Aquaporin PIP1-3/PIP1-4 (PIP1-3) (Zea mays (Maize)).